Reading from the N-terminus, the 235-residue chain is Elongation factor Tu (235 aa).

The tr-type G domain occupies 1 to 125 (KNMITGATQM…DGDKYIPTPS (125 aa)). A GTP-binding site is contributed by 47–50 (NKQD).

It belongs to the TRAFAC class translation factor GTPase superfamily. Classic translation factor GTPase family. EF-Tu/EF-1A subfamily. As to quaternary structure, monomer.

Its subcellular location is the cytoplasm. It carries out the reaction GTP + H2O = GDP + phosphate + H(+). Functionally, GTP hydrolase that promotes the GTP-dependent binding of aminoacyl-tRNA to the A-site of ribosomes during protein biosynthesis. This Leptolyngbya boryana (Plectonema boryanum) protein is Elongation factor Tu (tufA).